The chain runs to 762 residues: ABC-type oligopeptide transporter ABCB9 (762 aa).

The next 8 membrane-spanning stretches (helical) occupy residues V7–F27, V47–G67, L84–F104, F116–L136, V181–L201, F221–I241, V315–I335, and S412–I432. The region spanning L184–Q467 is the ABC transmembrane type-1 domain. An ABC transporter domain is found at V500–R736. G535–S542 contacts ATP.

Belongs to the ABC transporter superfamily. ABCB family. MHC peptide exporter (TC 3.A.1.209) subfamily. Homodimer. Interacts (via TMD0 region) with LAMP1; this interaction strongly stabilizes ABCB9 and protects ABCB9 against lysosomal degradation. Interacts (via TMD0 region) with LAMP2 (isoform LAMP-2B). Interacts (via TMD0) with YIF1B; this interaction allows (but is not essential) the ER-to-Golgi trafficking and strongly depends on a salt bridge within TMD0. In terms of tissue distribution, found in testis, particularly in the Sertoli cells of the seminiferous tubules. Also expressed in kidney, brain, heart, lung, spleen, thymus, intestine and testis. Higher expression detected in brain and testis than in thymus and intestine.

The protein localises to the lysosome membrane. The enzyme catalyses a [oligopeptide](in) + ATP + H2O = a [oligopeptide](out) + ADP + phosphate + H(+). ATP-dependent low-affinity peptide transporter which translocates a broad spectrum of peptides from the cytosol to the lysosomal lumen for degradation. Displays a broad peptide length specificity from 6-mer up to at least 59-mer peptides with an optimum of 23-mers. Binds and transports smaller and larger peptides with the same affinity. Favors positively charged, aromatic or hydrophobic residues in the N- and C-terminal positions whereas negatively charged residues as well as asparagine and methionine are not favored. This is ABC-type oligopeptide transporter ABCB9 from Rattus norvegicus (Rat).